Consider the following 316-residue polypeptide: Probable cell division protein WhiA (316 aa).

The segment at residues 275–309 is a DNA-binding region (H-T-H motif); it reads TLKELGEMVSGGKISKSGINHRLRKIDEIAEKLRA.

Belongs to the WhiA family.

In terms of biological role, involved in cell division and chromosome segregation. This is Probable cell division protein WhiA from Bacillus cereus (strain G9842).